A 225-amino-acid chain; its full sequence is Uracil-DNA glycosylase (225 aa).

The active-site Proton acceptor is the D65.

Belongs to the uracil-DNA glycosylase (UDG) superfamily. UNG family.

The protein resides in the cytoplasm. It catalyses the reaction Hydrolyzes single-stranded DNA or mismatched double-stranded DNA and polynucleotides, releasing free uracil.. Excises uracil residues from the DNA which can arise as a result of misincorporation of dUMP residues by DNA polymerase or due to deamination of cytosine. This Bacillus thuringiensis subsp. konkukian (strain 97-27) protein is Uracil-DNA glycosylase.